The chain runs to 496 residues: uncharacterized protein (496 aa).

Transmembrane regions (helical) follow at residues 33–53, 89–109, 127–147, 154–174, 193–213, 247–267, 285–305, 320–340, 355–375, 382–402, 411–431, and 455–475; these read FLKGLLSAITLLFFILLLIFA, LNFLIVFRFFILSFTLFYTLI, PWFVLYLVIATISFLLFFTFF, VFNLVFLLLVLFLLNLSYEIF, LIIAMVFQALLLLFVIITPLV, IILIAFFFFLITFIVLANTNF, LWFILLLFSAIFIWLLRVFAY, LWVYILQSFFAIIILILYMVF, LLNLVVTQTILSLSLFLVTLF, SLINVFITITVQMSVFGIYIF, LLVLLKVIMILIILTAAIVGF, and VQIMLLLNFSLNFTLISYLTI.

Its subcellular location is the cell membrane. This is an uncharacterized protein from Ureaplasma parvum serovar 3 (strain ATCC 700970).